We begin with the raw amino-acid sequence, 415 residues long: MKGSYKSRWVIVIVVVIAAIAAFWFWQGRNDSRSAAPGATKQAQQSPAGGRRGMRSGPLAPVQAATAVEQAVPRYLTGLGTITAANTVTVRSRVDGQLIALHFQEGQQVKAGDLLAEIDPSQFKVALAQAQGQLAKDKATLANARRDLARYQQLAKTNLVSRQELDAQQALVSETEGTIKADEASVASAQLQLDWSRITAPVDGRVGLKQVDVGNQISSGDTTGIVVITQTHPIDLVFTLPESDIATVVQAQKAGKPLVVEAWDRTNSKKLSEGTLLSLDNQIDATTGTIKVKARFNNQDDALFPNQFVNARMLVDTEQNAVVIPTAALQMGNEGHFVWVLNSENKVSKHLVTPGIQDSQKVVIRAGISAGDRVVTDGIDRLTEGAKVEVVEAQSATTPEEKATSREYAKKGARS.

An N-terminal signal peptide occupies residues 1–21; that stretch reads MKGSYKSRWVIVIVVVIAAIA. Disordered stretches follow at residues 32 to 60 and 392 to 415; these read SRSA…GPLA and EAQS…GARS. Over residues 399–415 the composition is skewed to basic and acidic residues; sequence PEEKATSREYAKKGARS.

It belongs to the membrane fusion protein (MFP) (TC 8.A.1) family. As to quaternary structure, part of a tripartite efflux system composed of MdtA, MdtB and MdtC.

Its subcellular location is the cell inner membrane. In terms of biological role, the MdtABC tripartite complex confers resistance against novobiocin and deoxycholate. This is Multidrug resistance protein MdtA from Escherichia coli (strain K12 / MC4100 / BW2952).